Reading from the N-terminus, the 266-residue chain is Small ribosomal subunit protein uS3 (266 aa).

Residues 39–107 (VREYLKKKLK…PVHVNIEEIR (69 aa)) form the KH type-2 domain. The tract at residues 218 to 266 (EVAEDKRPRRNARPGDRRPRRDGEGGAPGARRGAPRRGAGKPEDGKTGE) is disordered. Basic and acidic residues-rich tracts occupy residues 230–241 (RPGDRRPRRDGE) and 257–266 (GKPEDGKTGE).

It belongs to the universal ribosomal protein uS3 family. Part of the 30S ribosomal subunit. Forms a tight complex with proteins S10 and S14.

Functionally, binds the lower part of the 30S subunit head. Binds mRNA in the 70S ribosome, positioning it for translation. The polypeptide is Small ribosomal subunit protein uS3 (Burkholderia ambifaria (strain MC40-6)).